The sequence spans 204 residues: Glycerol-3-phosphate acyltransferase (204 aa).

A run of 5 helical transmembrane segments spans residues 12-32 (LVMG…HWLA), 85-105 (WQVA…WLGW), 117-137 (MLLG…LTVL), 142-162 (IVSL…ILRF), and 163-183 (QGNS…MVVW).

Belongs to the PlsY family. In terms of assembly, probably interacts with PlsX.

It is found in the cell inner membrane. It carries out the reaction an acyl phosphate + sn-glycerol 3-phosphate = a 1-acyl-sn-glycero-3-phosphate + phosphate. It participates in lipid metabolism; phospholipid metabolism. In terms of biological role, catalyzes the transfer of an acyl group from acyl-phosphate (acyl-PO(4)) to glycerol-3-phosphate (G3P) to form lysophosphatidic acid (LPA). This enzyme utilizes acyl-phosphate as fatty acyl donor, but not acyl-CoA or acyl-ACP. This is Glycerol-3-phosphate acyltransferase from Prochlorococcus marinus (strain MIT 9313).